A 502-amino-acid polypeptide reads, in one-letter code: UPF0371 protein CLH_2534 (502 aa).

It belongs to the UPF0371 family.

This is UPF0371 protein CLH_2534 from Clostridium botulinum (strain Alaska E43 / Type E3).